A 136-amino-acid polypeptide reads, in one-letter code: Histone H3.3C (136 aa).

Residues 1–10 show a composition bias toward polar residues; it reads MARTKQTACK. A disordered region spans residues 1–39; it reads MARTKQTACKSTGRKAPRKQLATKAAHKSAPAMGGVKKP. Position 3 is an asymmetric dimethylarginine; by PRMT6 (Arg-3). A Phosphothreonine; by HASPIN modification is found at Thr-4. Lys-5 is modified (allysine; alternate). At Lys-5 the chain carries N6,N6,N6-trimethyllysine; alternate. An N6,N6-dimethyllysine; alternate modification is found at Lys-5. Lys-5 bears the N6-(2-hydroxyisobutyryl)lysine; alternate mark. Lys-5 bears the N6-acetyllysine; alternate mark. At Lys-5 the chain carries N6-methyllysine; alternate. At Gln-6 the chain carries 5-glutamyl dopamine; alternate. Gln-6 bears the 5-glutamyl serotonin; alternate mark. Thr-7 carries the post-translational modification Phosphothreonine; by PKC. Position 10 is an N6-(2-hydroxyisobutyryl)lysine; alternate (Lys-10). Lys-10 carries the N6-lactoyllysine; alternate modification. At Lys-10 the chain carries N6-methylated lysine. ADP-ribosylserine; alternate is present on Ser-11. Ser-11 bears the Phosphoserine; alternate; by AURKB, AURKC, RPS6KA3, RPS6KA4 and RPS6KA5 mark. Thr-12 carries the phosphothreonine; by PKC modification. The residue at position 15 (Lys-15) is an N6-(2-hydroxyisobutyryl)lysine; alternate. Lys-15 carries the post-translational modification N6-lactoyllysine; alternate. At Lys-15 the chain carries N6-acetyllysine. An N6-glutaryllysine; alternate modification is found at Lys-15. Arg-18 carries the asymmetric dimethylarginine modification. An N6-(2-hydroxyisobutyryl)lysine; alternate mark is found at Lys-19, Lys-24, and Lys-28. The residue at position 19 (Lys-19) is an N6-acetyllysine; alternate. Lys-19, Lys-24, and Lys-28 each carry N6-lactoyllysine; alternate. Lys-19, Lys-24, and Lys-28 each carry N6-glutaryllysine; alternate. N6-butyryllysine; alternate is present on residues Lys-19 and Lys-24. Lys-19 bears the N6-methylated lysine; alternate mark. At Lys-24 the chain carries N6-acetyllysine. Position 28 is an N6-acetyllysine; alternate (Lys-28). An N6-methylated lysine; alternate modification is found at Lys-28. Ser-29 carries the ADP-ribosylserine; alternate modification. Ser-29 bears the Phosphoserine; alternate; by AURKB, AURKC and RPS6KA5 mark. Lys-37 carries the N6-(2-hydroxyisobutyryl)lysine; alternate modification. Lys-37 carries the N6-acetyllysine; alternate modification. Position 37 is an N6-methylated lysine; alternate (Lys-37). Position 42 is a phosphotyrosine (Tyr-42). N6-(2-hydroxyisobutyryl)lysine; alternate is present on Lys-57. N6-lactoyllysine; alternate is present on Lys-57. Lys-57 is modified (N6-glutaryllysine; alternate). The residue at position 57 (Lys-57) is an N6-succinyllysine; alternate. Ser-58 bears the Phosphoserine mark. N6-(2-hydroxyisobutyryl)lysine; alternate is present on residues Lys-65 and Lys-80. Residues Lys-65 and Lys-80 each carry the N6-methylated lysine modification. Lys-80 carries the post-translational modification N6-lactoyllysine; alternate. Lys-80 carries the post-translational modification N6-glutaryllysine; alternate. Lys-80 bears the N6-succinyllysine; alternate mark. Thr-81 carries the phosphothreonine modification. An N6-acetyllysine; alternate mark is found at Lys-116 and Lys-123. Lys-116 and Lys-123 each carry N6-glutaryllysine; alternate. Position 123 is an N6-(2-hydroxyisobutyryl)lysine; alternate (Lys-123). Lys-123 carries the N6-methylated lysine; alternate modification. N6-succinyllysine; alternate is present on Lys-123.

This sequence belongs to the histone H3 family. The nucleosome is a histone octamer containing two molecules each of H2A, H2B, H3 and H4 assembled in one H3-H4 heterotetramer and two H2A-H2B heterodimers. The octamer wraps approximately 147 bp of DNA. In terms of processing, acetylation is generally linked to gene activation. Acetylation on Lys-19 (H3K18ac) and Lys-24 (H3K24ac) favors methylation at Arg-18 (H3R17me). Acetylation at Lys-123 (H3K122ac) by EP300/p300 plays a central role in chromatin structure: localizes at the surface of the histone octamer and stimulates transcription, possibly by promoting nucleosome instability. Post-translationally, asymmetric dimethylation at Arg-18 (H3R17me2a) is linked to gene activation. Asymmetric dimethylation at Arg-3 (H3R2me2a) by PRMT6 is linked to gene repression and is mutually exclusive with H3 Lys-5 methylation (H3K4me2 and H3K4me3). H3R2me2a is present at the 3' of genes regardless of their transcription state and is enriched on inactive promoters, while it is absent on active promoters. Methylation at Lys-5 (H3K4me) and Lys-80 (H3K79me) are linked to gene activation. Methylation at Lys-5 (H3K4me) facilitates subsequent acetylation of H3 and H4. Methylation at Lys-80 (H3K79me) is associated with DNA double-strand break (DSB) responses and is a specific target for TP53BP1. Methylation at Lys-10 (H3K9me) and Lys-28 (H3K27me) are linked to gene repression. Methylation at Lys-10 (H3K9me) is a specific target for HP1 proteins (CBX1, CBX3 and CBX5) and prevents subsequent phosphorylation at Ser-11 (H3S10ph) and acetylation of H3 and H4. Methylation at Lys-5 (H3K4me) and Lys-80 (H3K79me) require preliminary monoubiquitination of H2B at 'Lys-120'. In terms of processing, phosphorylated at Thr-4 (H3T3ph) by HASPIN during prophase and dephosphorylated during anaphase. Phosphorylation at Ser-11 (H3S10ph) by AURKB is crucial for chromosome condensation and cell-cycle progression during mitosis and meiosis. In addition phosphorylation at Ser-11 (H3S10ph) by RPS6KA4 and RPS6KA5 is important during interphase because it enables the transcription of genes following external stimulation, like mitogens, stress, growth factors or UV irradiation and result in the activation of genes, such as c-fos and c-jun. Phosphorylation at Ser-11 (H3S10ph), which is linked to gene activation, prevents methylation at Lys-10 (H3K9me) but facilitates acetylation of H3 and H4. Phosphorylation at Ser-11 (H3S10ph) by AURKB mediates the dissociation of HP1 proteins (CBX1, CBX3 and CBX5) from heterochromatin. Phosphorylation at Ser-11 (H3S10ph) is also an essential regulatory mechanism for neoplastic cell transformation. Phosphorylated at Ser-29 (H3S28ph) by MAP3K20 isoform 1, RPS6KA5 or AURKB during mitosis or upon ultraviolet B irradiation. Phosphorylation at Thr-7 (H3T6ph) by PRKCB is a specific tag for epigenetic transcriptional activation that prevents demethylation of Lys-5 (H3K4me) by LSD1/KDM1A. At centromeres, specifically phosphorylated at Thr-12 (H3T11ph) from prophase to early anaphase, by DAPK3 and PKN1. Phosphorylation at Thr-12 (H3T11ph) by PKN1 or isoform M2 of PKM (PKM2) is a specific tag for epigenetic transcriptional activation that promotes demethylation of Lys-10 (H3K9me) by KDM4C/JMJD2C. Phosphorylation at Tyr-42 (H3Y41ph) by JAK2 promotes exclusion of CBX5 (HP1 alpha) from chromatin. Post-translationally, lysine deamination at Lys-5 (H3K4all) to form allysine only takes place on H3K4me3 and results in gene repression. Butyrylation of histones marks active promoters and competes with histone acetylation. It is present during late spermatogenesis. In terms of processing, succinylation at Lys-80 (H3K79succ) by KAT2A takes place with a maximum frequency around the transcription start sites of genes. It gives a specific tag for epigenetic transcription activation. Desuccinylation at Lys-123 (H3K122succ) by SIRT7 in response to DNA damage promotes chromatin condensation and double-strand breaks (DSBs) repair. Post-translationally, serine ADP-ribosylation constitutes the primary form of ADP-ribosylation of proteins in response to DNA damage. Serine ADP-ribosylation at Ser-11 (H3S10ADPr) is mutually exclusive with phosphorylation at Ser-11 (H3S10ph) and impairs acetylation at Lys-10 (H3K9ac).

It is found in the nucleus. The protein resides in the chromosome. Functionally, core component of nucleosome. Nucleosomes wrap and compact DNA into chromatin, limiting DNA accessibility to the cellular machineries which require DNA as a template. Histones thereby play a central role in transcription regulation, DNA repair, DNA replication and chromosomal stability. DNA accessibility is regulated via a complex set of post-translational modifications of histones, also called histone code, and nucleosome remodeling. The protein is Histone H3.3C of Cairina moschata (Muscovy duck).